The sequence spans 1093 residues: Leukemia inhibitory factor receptor (1093 aa).

An N-terminal signal peptide occupies residues 1–43 (MGAFSWWRQPSWMADNKRGRMTPSLPWLLSALTLLHLMMHVNG). Over 44-829 (LKRGVQQDLK…SMFVVTKENS (786 aa)) the chain is Extracellular. In terms of domain architecture, Fibronectin type-III 1 spans 45 to 127 (KRGVQQDLKC…QSKFTLNEKD (83 aa)). Disulfide bonds link Cys54/Cys64 and Cys81/Cys89. Asn165, Asn200, Asn239, and Asn262 each carry an N-linked (GlcNAc...) asparagine glycan. 2 disulfide bridges follow: Cys209–Cys266 and Cys337–Cys347. Fibronectin type-III domains lie at 331–428 (VPQK…ERVA), 431–530 (VPIS…TEAT), 534–625 (GPDT…IPND), 623–715 (PNDD…IGYI), and 720–829 (PIVA…KENS). 6 N-linked (GlcNAc...) asparagine glycosylation sites follow: Asn386, Asn403, Asn422, Asn441, Asn454, and Asn477. Cys462 and Cys507 are oxidised to a cystine. A WSXWS motif motif is present at residues 515–519 (WSKWS). N-linked (GlcNAc...) asparagine glycans are attached at residues Asn568, Asn648, Asn659, Asn676, Asn725, and Asn783. A helical transmembrane segment spans residues 830 to 850 (VGLIIAILIPVAVAVIVGVVT). Over 851–1093 (SILCYRKREW…TNFFQNKPND (243 aa)) the chain is Cytoplasmic. The Box 1 motif motif lies at 865 to 873 (FYPDIPNPE). Disordered regions lie at residues 908–941 (ESRS…ENQA) and 1003–1093 (LPIN…KPND). Phosphoserine occurs at positions 923 and 1040. Polar residues-rich tracts occupy residues 1028-1063 (ANVN…NSRQ) and 1082-1093 (SFTNFFQNKPND).

This sequence belongs to the type I cytokine receptor family. Type 2 subfamily. As to quaternary structure, heterodimer composed of LIFR and IL6ST. The heterodimer formed by LIFR and IL6ST interacts with the complex formed by CNTF and CNTFR.

It localises to the cell membrane. Functionally, signal-transducing molecule. May have a common pathway with IL6ST. The soluble form inhibits the biological activity of LIF by blocking its binding to receptors on target cells. This Rattus norvegicus (Rat) protein is Leukemia inhibitory factor receptor (Lifr).